The primary structure comprises 356 residues: Protein-arginine kinase (356 aa).

In terms of domain architecture, Phosphagen kinase C-terminal spans Ile24 to Ala256. ATP is bound by residues Ser27 to Arg31, His93, Arg127, Arg178 to Met182, and Arg209 to Glu214. Residues Arg339–Ala344 carry the RDXXRA motif of the pArg binding pocket involved in allosteric regulation motif.

This sequence belongs to the ATP:guanido phosphotransferase family.

It catalyses the reaction L-arginyl-[protein] + ATP = N(omega)-phospho-L-arginyl-[protein] + ADP + H(+). With respect to regulation, appears to be allosterically activated by the binding of pArg-containing polypeptides to the pArg-binding pocket localized in the C-terminal domain of McsB. Its function is as follows. Catalyzes the specific phosphorylation of arginine residues in proteins. The polypeptide is Protein-arginine kinase (Pelotomaculum thermopropionicum (strain DSM 13744 / JCM 10971 / SI)).